A 262-amino-acid polypeptide reads, in one-letter code: Small ribosomal subunit protein eS1 (262 aa).

It belongs to the eukaryotic ribosomal protein eS1 family. In terms of assembly, component of the small ribosomal subunit. Mature ribosomes consist of a small (40S) and a large (60S) subunit. The 40S subunit contains about 33 different proteins and 1 molecule of RNA (18S). The 60S subunit contains about 49 different proteins and 3 molecules of RNA (25S, 5.8S and 5S).

The protein localises to the cytoplasm. The protein is Small ribosomal subunit protein eS1 of Plasmodium knowlesi (strain H).